We begin with the raw amino-acid sequence, 155 residues long: Small ribosomal subunit protein uS7cz/uS7cy (155 aa).

It belongs to the universal ribosomal protein uS7 family. As to quaternary structure, part of the 30S ribosomal subunit.

Its subcellular location is the plastid. It localises to the chloroplast. In terms of biological role, one of the primary rRNA binding proteins, it binds directly to 16S rRNA where it nucleates assembly of the head domain of the 30S subunit. In Phalaenopsis aphrodite subsp. formosana (Moth orchid), this protein is Small ribosomal subunit protein uS7cz/uS7cy (rps7-A).